The primary structure comprises 721 residues: MPRAKPMPKLPAEAYAIIEGRHADPFHYLGLHPEGGKSVVRAFLPEASNVEAVGEHGEVARLDRVHDAGLFVGALPNGSKHYQLRAKFGDSIVEFEDAYRFPPILTDFDLYLLGEGTHQRLYDKLGAHPMTLDGVDGIGFVVLAPNARRVSVVGDFNFWDSRRHPMRVRGSGYWELFIPHAKRGDHYKFDIVGPHGHQLPLKSDPMAFASEVRPKTASIVFDEAHLPRPRPAPDGINALSAPMSIYEVHLGSWRRKGDNEWLTYRELAEQLPAYARDMGFTHLEFLPVSEHPFDGSWGYQPTGLYAPTSRFGTPEDFAALVDACHREGVGVLLDWVPGHFPDDPHGLGSFDGTSLYEHANPLQGRHLDWGTLIYNYGRTEVTNFLVSNALFWLERYAIDGLRVDAVASMLYLDYSRPPGAWIPNQYGGRENIEAIAFLRRFNTELFARFPQATTAAEESTAWPQVSRPVEFGGLGFGYKWNMGWMHDTLNYISKDPIHRKHHHGEILFGLHYAFSENFILPLSHDEVVHGKRSILGRMPGDEWQRFANLRAYYSFMFGHPGKKLLFMGAEIAQSREWNHDQSLDWHLLEYKYHSGIQALIRDLNRLYRAVPALHQMDCDQAGFEWLITDDANRNVFAWLRKGLDEHARCLVIVNFSPNVYRNYRVRVPFAGKWKEVLNSDSAHYGGSNVGNIGEVHAVDGKTPELRLTIPPLAAIFLVPES.

Catalysis depends on Asp-404, which acts as the Nucleophile. The active-site Proton donor is the Glu-457.

This sequence belongs to the glycosyl hydrolase 13 family. GlgB subfamily. In terms of assembly, monomer.

It catalyses the reaction Transfers a segment of a (1-&gt;4)-alpha-D-glucan chain to a primary hydroxy group in a similar glucan chain.. It functions in the pathway glycan biosynthesis; glycogen biosynthesis. In terms of biological role, catalyzes the formation of the alpha-1,6-glucosidic linkages in glycogen by scission of a 1,4-alpha-linked oligosaccharide from growing alpha-1,4-glucan chains and the subsequent attachment of the oligosaccharide to the alpha-1,6 position. This chain is 1,4-alpha-glucan branching enzyme GlgB, found in Bradyrhizobium diazoefficiens (strain JCM 10833 / BCRC 13528 / IAM 13628 / NBRC 14792 / USDA 110).